Reading from the N-terminus, the 244-residue chain is Probable transcriptional regulatory protein CHY_1525 (244 aa).

It belongs to the TACO1 family.

The protein localises to the cytoplasm. This chain is Probable transcriptional regulatory protein CHY_1525, found in Carboxydothermus hydrogenoformans (strain ATCC BAA-161 / DSM 6008 / Z-2901).